Here is a 133-residue protein sequence, read N- to C-terminus: Protein archease (133 aa).

Ca(2+) is bound by residues Asp11, Asp132, and Leu133.

Belongs to the archease family.

In terms of biological role, activates the tRNA-splicing ligase complex by facilitating the enzymatic turnover of catalytic subunit RtcB. Acts by promoting the guanylylation of RtcB, a key intermediate step in tRNA ligation. Can also alter the NTP specificity of RtcB such that ATP, dGTP or ITP is used efficiently. This Thermoplasma volcanium (strain ATCC 51530 / DSM 4299 / JCM 9571 / NBRC 15438 / GSS1) protein is Protein archease.